We begin with the raw amino-acid sequence, 387 residues long: Monomeric sarcosine oxidase (387 aa).

6-36 lines the FAD pocket; that stretch reads DVIVVGAGSMGMAAGYYLAKQGVKTLLVDSF. Cys316 is modified (S-8alpha-FAD cysteine).

Belongs to the MSOX/MTOX family. MSOX subfamily. In terms of assembly, monomer. Requires FAD as cofactor.

It is found in the cytoplasm. The catalysed reaction is sarcosine + O2 + H2O = formaldehyde + glycine + H2O2. Catalyzes the oxidative demethylation of sarcosine. The protein is Monomeric sarcosine oxidase (soxA) of Bacillus sp. (strain NS-129).